A 265-amino-acid chain; its full sequence is tRNA (guanine-N(1)-)-methyltransferase (265 aa).

S-adenosyl-L-methionine-binding positions include G110 and 129 to 134 (LGDFVM). The segment at 243 to 265 (LAAWGAPPPPLPKRRRGAKPNPN) is disordered. Over residues 254-265 (PKRRRGAKPNPN) the composition is skewed to basic residues.

This sequence belongs to the RNA methyltransferase TrmD family. Homodimer.

It is found in the cytoplasm. It carries out the reaction guanosine(37) in tRNA + S-adenosyl-L-methionine = N(1)-methylguanosine(37) in tRNA + S-adenosyl-L-homocysteine + H(+). In terms of biological role, specifically methylates guanosine-37 in various tRNAs. The protein is tRNA (guanine-N(1)-)-methyltransferase of Deinococcus geothermalis (strain DSM 11300 / CIP 105573 / AG-3a).